A 234-amino-acid chain; its full sequence is Ubiquitin thioesterase OTUB2 (234 aa).

The region spanning 40–231 (TSIRKTKGDG…TSHYNILYAA (192 aa)) is the OTU domain. The active site involves D48. The active-site Nucleophile is the C51. Catalysis depends on residues H205 and H224.

This sequence belongs to the peptidase C65 family.

The catalysed reaction is Thiol-dependent hydrolysis of ester, thioester, amide, peptide and isopeptide bonds formed by the C-terminal Gly of ubiquitin (a 76-residue protein attached to proteins as an intracellular targeting signal).. Its function is as follows. Hydrolase that can remove conjugated ubiquitin from proteins in vitro and may therefore play an important regulatory role at the level of protein turnover by preventing degradation. Mediates deubiquitination of 'Lys-11'-,'Lys-48'- and 'Lys-63'-linked polyubiquitin chains, with a preference for 'Lys-63'-linked polyubiquitin chains. This is Ubiquitin thioesterase OTUB2 (Otub2) from Mus musculus (Mouse).